A 369-amino-acid chain; its full sequence is Anhydro-N-acetylmuramic acid kinase (369 aa).

An ATP-binding site is contributed by 12 to 19 (GTSMDGVD).

It belongs to the anhydro-N-acetylmuramic acid kinase family.

The catalysed reaction is 1,6-anhydro-N-acetyl-beta-muramate + ATP + H2O = N-acetyl-D-muramate 6-phosphate + ADP + H(+). It participates in amino-sugar metabolism; 1,6-anhydro-N-acetylmuramate degradation. Its pathway is cell wall biogenesis; peptidoglycan recycling. Functionally, catalyzes the specific phosphorylation of 1,6-anhydro-N-acetylmuramic acid (anhMurNAc) with the simultaneous cleavage of the 1,6-anhydro ring, generating MurNAc-6-P. Is required for the utilization of anhMurNAc either imported from the medium or derived from its own cell wall murein, and thus plays a role in cell wall recycling. In Shewanella sp. (strain W3-18-1), this protein is Anhydro-N-acetylmuramic acid kinase.